The primary structure comprises 387 residues: Zn(2)-C6 fungal-type trascription factor aoiH (387 aa).

The segment at residues 21-48 (CDFCALSKVKCDRGQPQCVRCIKSGIDC) is a DNA-binding region (zn(2)-C6 fungal-type). The span at 68–87 (VRSTSATTQGTRRKQQTIAQ) shows a compositional bias: polar residues. The interval 68–94 (VRSTSATTQGTRRKQQTIAQHSPRRRI) is disordered.

It localises to the nucleus. Its function is as follows. Transcription factor; part of the gene cluster that mediates the biosynthesis of a methylated derivative of known natural products orthosporin and diaporthin. Positively regultaes the expression of the non-reducing polyketide synthase aoiG and the O-methyltransferase aoiO. The protein is Zn(2)-C6 fungal-type trascription factor aoiH of Aspergillus oryzae (strain ATCC 42149 / RIB 40) (Yellow koji mold).